A 593-amino-acid chain; its full sequence is Cytochrome c oxidase polypeptide 1 (593 aa).

The next 2 membrane-spanning stretches (helical) occupy residues 5 to 25 and 71 to 91; these read ASSI…VAVL and IGIL…VSVL. H117 provides a ligand contact to Fe(II)-heme a. A run of 6 helical transmembrane segments spans residues 122-142, 154-174, 204-224, 246-266, 288-308, and 320-340; these read LFLF…PLLI, AIAF…FLIP, GLHL…ATIF, QSGL…MLLL, LFWF…MGIV, and LFGF…SFGV. Cu cation-binding residues include H294 and Y298. A cross-link (1'-histidyl-3'-tyrosine (His-Tyr)) is located at residues 294–298; sequence HPEVY. Residues H343 and H344 each coordinate Cu cation. 5 helical membrane passes run 358-378, 401-421, 425-445, 467-487, and 506-526; these read FMAV…NWIT, FIIG…LILH, YVVG…LFAA, FWTA…LGYG, and LATV…FNMA. Residue H429 coordinates heme a3. H431 contacts Fe(II)-heme a. Residues 562–593 form a disordered region; sequence TTVLPDGGDEAQSEADAVTDGGQPAADSDTES.

This sequence belongs to the heme-copper respiratory oxidase family.

It is found in the cell membrane. It catalyses the reaction 4 Fe(II)-[cytochrome c] + O2 + 8 H(+)(in) = 4 Fe(III)-[cytochrome c] + 2 H2O + 4 H(+)(out). Its pathway is energy metabolism; oxidative phosphorylation. Functionally, cytochrome c oxidase is the component of the respiratory chain that catalyzes the reduction of oxygen to water. Subunits 1-3 form the functional core of the enzyme complex. CO I is the catalytic subunit of the enzyme. Electrons originating in cytochrome c are transferred via the copper A center of subunit 2 and heme A of subunit 1 to the bimetallic center formed by heme A3 and copper B. The protein is Cytochrome c oxidase polypeptide 1 (coxA2) of Halobacterium salinarum (strain ATCC 700922 / JCM 11081 / NRC-1) (Halobacterium halobium).